We begin with the raw amino-acid sequence, 428 residues long: C4-dicarboxylate transport protein (428 aa).

Helical transmembrane passes span 7–27 (SLYFWVLVAIALGVILGIVAP), 40–60 (FIKLIKMVIAPIIFCTVVLGI), 75–95 (LALLYFEVVSTVSLILGLLIV), 143–163 (AFARGEILQVLLLAVLFGIAL), 196–216 (PIGAFGAMAFTIGAYGIGSLF), 221–241 (LMATFYLTCLCFIFLVLGAIA), 306–326 (IYLTMAAVFVAQATNSAMTLG), 329–349 (FTLLAVLLLMSKGAAGVTGSG), and 351–371 (IVLAATLSAIGKVPVGGLALI).

This sequence belongs to the dicarboxylate/amino acid:cation symporter (DAACS) (TC 2.A.23) family.

It localises to the cell inner membrane. In terms of biological role, responsible for the transport of dicarboxylates such as succinate, fumarate, and malate from the periplasm across the membrane. This Solibacter usitatus (strain Ellin6076) protein is C4-dicarboxylate transport protein.